Consider the following 710-residue polypeptide: Solute carrier organic anion transporter family member 3A1 (710 aa).

N-acetylmethionine is present on methionine 1. Gly residues predominate over residues 1 to 15; sequence MQGKKPGGSSGGGRS. Positions 1–25 are disordered; it reads MQGKKPGGSSGGGRSGELQGDEAQR. The Cytoplasmic portion of the chain corresponds to 1–40; that stretch reads MQGKKPGGSSGGGRSGELQGDEAQRNKKKKKKVSCFSNIK. A helical membrane pass occupies residues 41 to 60; it reads IFLVSECALMLAQGTVGAYL. Over 61 to 79 the chain is Extracellular; it reads VSVLTTLERRFNLQSADVG. A helical transmembrane segment spans residues 80–100; the sequence is VIASSFEIGNLALILFVSYFG. Residues 101–106 are Cytoplasmic-facing; that stretch reads ARGHRP. A helical membrane pass occupies residues 107-131; it reads RLIGCGGIVMALGALLSALPEFLTH. The Extracellular segment spans residues 132 to 174; it reads QYKYEAGEIRWGAEGRDVCATNGSSSDEGPDPDLICRNRTATN. N-linked (GlcNAc...) asparagine glycosylation is found at asparagine 153 and asparagine 169. The helical transmembrane segment at 175 to 203 threads the bilayer; that stretch reads MMYLLLIGAQVLLGIGATPVQPLGVSYID. The Cytoplasmic portion of the chain corresponds to 204–222; it reads DHVRRKDSSLYIGILFTML. Residues 223–243 form a helical membrane-spanning segment; that stretch reads VFGPACGFILGSFCTKIYVDA. The Extracellular segment spans residues 244-261; the sequence is VFIDTSNLDITPDDPRWI. The chain crosses the membrane as a helical span at residues 262-286; that stretch reads GAWWGGFLLCGALLFFSSLLMFGFP. The Cytoplasmic segment spans residues 287-344; sequence QSLPPHSDPGMESEQAMLPEREYERPKPSNGVLRHPLEPDSSASCFQQLRVIPKVTKH. A helical membrane pass occupies residues 345–366; sequence LLSNPVFTCIVLAACMEIAVVA. Topologically, residues 367-386 are extracellular; it reads GFAAFLGKYLEQQFNLTTSS. N-linked (GlcNAc...) asparagine glycosylation occurs at asparagine 381. The helical transmembrane segment at 387–410 threads the bilayer; it reads ANQLLGMTAIPCACLGIFLGGLLV. At 411–414 the chain is on the cytoplasmic side; sequence KKLS. A helical membrane pass occupies residues 415-438; it reads LSALGAIRMAMLVNLVSTACYVSF. Topologically, residues 439 to 539 are extracellular; the sequence is LFLGCDTGPV…PGCQEAFLTF (101 aa). N-linked (GlcNAc...) asparagine glycosylation is present at asparagine 457. Residues 465–513 form the Kazal-like domain; it reads LDPYSPCNNNCECQTDSFTPVCGADGITYLSACFAGCNSTNLTGCACLT. 3 disulfide bridges follow: cysteine 471/cysteine 497, cysteine 475/cysteine 486, and cysteine 477/cysteine 501. N-linked (GlcNAc...) asparagine glycans are attached at residues asparagine 502, asparagine 505, and asparagine 519. The helical transmembrane segment at 540-562 threads the bilayer; it reads LCVMCVCSLIGAMAQTPSVIILI. Residues 563–571 are Cytoplasmic-facing; that stretch reads RTVSPELKS. The helical transmembrane segment at 572–597 threads the bilayer; sequence YALGVLFLLLRLLGFIPPPLIFGAGI. Topologically, residues 598 to 630 are extracellular; sequence DSTCLFWSTFCGEQGACVLYDNVVYRYLYVSIA. The helical transmembrane segment at 631–648 threads the bilayer; that stretch reads IALKSFAFILYTTTWQCL. At 649–705 the chain is on the cytoplasmic side; the sequence is RKNYKRYIKNHEGGLSTSEFFASTLTLDNLGRDPVPAHQTHRTKFIYNLEDHEWCEN.

This sequence belongs to the organo anion transporter (TC 2.A.60) family. Widely expressed.

It localises to the basolateral cell membrane. The protein resides in the apical cell membrane. It is found in the basal cell membrane. The catalysed reaction is L-thyroxine(out) = L-thyroxine(in). It catalyses the reaction prostaglandin E1(out) = prostaglandin E1(in). It carries out the reaction prostaglandin E2(out) = prostaglandin E2(in). The enzyme catalyses prostaglandin F2alpha(out) = prostaglandin F2alpha(in). The catalysed reaction is (5Z,8Z,11Z,14Z)-eicosatetraenoate(out) = (5Z,8Z,11Z,14Z)-eicosatetraenoate(in). It catalyses the reaction taurocholate(out) = taurocholate(in). It carries out the reaction glycocholate(out) = glycocholate(in). The enzyme catalyses estrone 3-sulfate(out) = estrone 3-sulfate(in). The catalysed reaction is argipressin(out) = argipressin(in). Its function is as follows. Putative organic anion antiporter with apparent broad substrate specificity. Recognizes various substrates including thyroid hormone L-thyroxine, prostanoids such as prostaglandin E1 and E2, bile acids such as taurocholate, glycolate and glycochenodeoxycholate and peptide hormones such as L-arginine vasopressin, likely operating in a tissue-specific manner. The transport mechanism, its electrogenicity and potential tissue-specific counterions remain to be elucidated. The protein is Solute carrier organic anion transporter family member 3A1 (Slco3a1) of Mus musculus (Mouse).